Reading from the N-terminus, the 64-residue chain is Small, acid-soluble spore protein beta (64 aa).

The protein belongs to the alpha/beta-type SASP family.

SASP are bound to spore DNA. They are double-stranded DNA-binding proteins that cause DNA to change to an a-like conformation. They protect the DNA backbone from chemical and enzymatic cleavage and are thus involved in dormant spore's high resistance to UV light. The polypeptide is Small, acid-soluble spore protein beta (Paraclostridium bifermentans (Clostridium bifermentans)).